The primary structure comprises 356 residues: Phosphoserine aminotransferase (356 aa).

Arg41 lines the L-glutamate pocket. Pyridoxal 5'-phosphate is bound by residues Ala75 to Thr76, Trp100, Thr147, Asp166, and Gln189. Position 190 is an N6-(pyridoxal phosphate)lysine (Lys190). Asn227 to Thr228 is a pyridoxal 5'-phosphate binding site.

Belongs to the class-V pyridoxal-phosphate-dependent aminotransferase family. SerC subfamily. As to quaternary structure, homodimer. The cofactor is pyridoxal 5'-phosphate.

It localises to the cytoplasm. The enzyme catalyses O-phospho-L-serine + 2-oxoglutarate = 3-phosphooxypyruvate + L-glutamate. It catalyses the reaction 4-(phosphooxy)-L-threonine + 2-oxoglutarate = (R)-3-hydroxy-2-oxo-4-phosphooxybutanoate + L-glutamate. The protein operates within amino-acid biosynthesis; L-serine biosynthesis; L-serine from 3-phospho-D-glycerate: step 2/3. Catalyzes the reversible conversion of 3-phosphohydroxypyruvate to phosphoserine and of 3-hydroxy-2-oxo-4-phosphonooxybutanoate to phosphohydroxythreonine. In Exiguobacterium sp. (strain ATCC BAA-1283 / AT1b), this protein is Phosphoserine aminotransferase.